A 546-amino-acid chain; its full sequence is CTP synthase (546 aa).

The tract at residues 1–267 (MTKFIFVTGG…AEQVLDILQL (267 aa)) is amidoligase domain. Ser-13 contributes to the CTP binding site. Residue Ser-13 coordinates UTP. Residue 14 to 19 (SIGKGI) coordinates ATP. Tyr-54 is an L-glutamine binding site. An ATP-binding site is contributed by Asp-71. Mg(2+) contacts are provided by Asp-71 and Glu-141. Residues 148 to 150 (DIE), 188 to 193 (KTKPTQ), and Lys-224 contribute to the CTP site. UTP is bound by residues 188 to 193 (KTKPTQ) and Lys-224. A Glutamine amidotransferase type-1 domain is found at 292-534 (EVAIVGKYVR…IKAALGSDLT (243 aa)). Residue Gly-354 coordinates L-glutamine. Cys-381 (nucleophile; for glutamine hydrolysis) is an active-site residue. Residues 382–385 (LGMQ), Glu-405, and Arg-462 contribute to the L-glutamine site. Active-site residues include His-507 and Glu-509.

This sequence belongs to the CTP synthase family. In terms of assembly, homotetramer.

The catalysed reaction is UTP + L-glutamine + ATP + H2O = CTP + L-glutamate + ADP + phosphate + 2 H(+). It catalyses the reaction L-glutamine + H2O = L-glutamate + NH4(+). It carries out the reaction UTP + NH4(+) + ATP = CTP + ADP + phosphate + 2 H(+). The protein operates within pyrimidine metabolism; CTP biosynthesis via de novo pathway; CTP from UDP: step 2/2. Its activity is regulated as follows. Allosterically activated by GTP, when glutamine is the substrate; GTP has no effect on the reaction when ammonia is the substrate. The allosteric effector GTP functions by stabilizing the protein conformation that binds the tetrahedral intermediate(s) formed during glutamine hydrolysis. Inhibited by the product CTP, via allosteric rather than competitive inhibition. In terms of biological role, catalyzes the ATP-dependent amination of UTP to CTP with either L-glutamine or ammonia as the source of nitrogen. Regulates intracellular CTP levels through interactions with the four ribonucleotide triphosphates. The sequence is that of CTP synthase from Synechococcus sp. (strain ATCC 27144 / PCC 6301 / SAUG 1402/1) (Anacystis nidulans).